Here is a 194-residue protein sequence, read N- to C-terminus: Cysteine and glycine-rich protein 2 (194 aa).

One can recognise an LIM zinc-binding 1 domain in the interval 10 to 61; that stretch reads CGACGRTVYHAEEVQCDGRSFHRCCFLCMVCRKNLDSTTVAIHDAEVYCKSC. Positions 64 to 69 match the Nuclear localization signal motif; the sequence is KKYGPK. Residues 120–171 form the LIM zinc-binding 2 domain; it reads CSRCGDSVYAAEKVIGAGKPWHKNCFRCAKCGKSLESTTLTEKEGEIYCKGC.

The protein resides in the nucleus. Its function is as follows. Totally down-regulated in transformed cells. May therefore take part in the control of cell growth and differentiation. This chain is Cysteine and glycine-rich protein 2 (CSRP2), found in Gallus gallus (Chicken).